A 341-amino-acid chain; its full sequence is Fructose-1,6-bisphosphatase, cytosolic (341 aa).

5 residues coordinate Mg(2+): Glu-71, Glu-100, Asp-121, Leu-123, and Asp-124. Residues 124 to 127 (DGSF), Asn-215, Tyr-247, Tyr-267, and Lys-277 each bind substrate. Glu-283 contributes to the Mg(2+) binding site.

The protein belongs to the FBPase class 1 family. The cofactor is Mg(2+).

The protein resides in the cytoplasm. It catalyses the reaction beta-D-fructose 1,6-bisphosphate + H2O = beta-D-fructose 6-phosphate + phosphate. The protein is Fructose-1,6-bisphosphatase, cytosolic of Pisum sativum (Garden pea).